Here is a 158-residue protein sequence, read N- to C-terminus: Transcription elongation factor GreA (158 aa).

Residues E2–H70 adopt a coiled-coil conformation.

The protein belongs to the GreA/GreB family.

Functionally, necessary for efficient RNA polymerase transcription elongation past template-encoded arresting sites. The arresting sites in DNA have the property of trapping a certain fraction of elongating RNA polymerases that pass through, resulting in locked ternary complexes. Cleavage of the nascent transcript by cleavage factors such as GreA or GreB allows the resumption of elongation from the new 3'terminus. GreA releases sequences of 2 to 3 nucleotides. This is Transcription elongation factor GreA from Staphylococcus epidermidis (strain ATCC 35984 / DSM 28319 / BCRC 17069 / CCUG 31568 / BM 3577 / RP62A).